The chain runs to 261 residues: Complex I assembly factor TIMMDC1, mitochondrial (261 aa).

3 helical membrane-spanning segments follow: residues 67–87 (LNSVYQAGFLGFLIGAIYGGV), 131–151 (WGWRVGLFTTSYFGIITCMSV), and 183–203 (AGGIIGGFLGGVAGVTSLLLM).

It belongs to the Tim17/Tim22/Tim23 family. As to quaternary structure, associates with complex I assembly intermediates during its biogenesis in a NdufAF3 and NdufAF4 dependent manner.

The protein resides in the membrane. Functionally, chaperone protein involved in the assembly of the mitochondrial NADH:ubiquinone oxidoreductase complex (complex I). Essential for viability. The sequence is that of Complex I assembly factor TIMMDC1, mitochondrial from Drosophila melanogaster (Fruit fly).